The following is a 415-amino-acid chain: Histidine--tRNA ligase (415 aa).

This sequence belongs to the class-II aminoacyl-tRNA synthetase family. In terms of assembly, homodimer.

It is found in the cytoplasm. It catalyses the reaction tRNA(His) + L-histidine + ATP = L-histidyl-tRNA(His) + AMP + diphosphate + H(+). This Rhodospirillum rubrum (strain ATCC 11170 / ATH 1.1.1 / DSM 467 / LMG 4362 / NCIMB 8255 / S1) protein is Histidine--tRNA ligase.